A 428-amino-acid chain; its full sequence is L-gulono-1,4-lactone dehydrogenase (428 aa).

The FAD-binding PCMH-type domain occupies 12 to 179 (QVCAPSAIVR…SQVTLQTVPL (168 aa)).

It belongs to the oxygen-dependent FAD-linked oxidoreductase family. A divalent metal cation serves as cofactor.

It catalyses the reaction L-gulono-1,4-lactone + 2 Fe(III)-[cytochrome c] = L-ascorbate + 2 Fe(II)-[cytochrome c] + 3 H(+). Its pathway is cofactor biosynthesis; L-ascorbate biosynthesis. Its function is as follows. Oxidizes L-gulono-1,4-lactone to L-xylo-hexulonolactone which spontaneously isomerizes to L-ascorbate. The sequence is that of L-gulono-1,4-lactone dehydrogenase from Mycobacterium tuberculosis (strain CDC 1551 / Oshkosh).